A 486-amino-acid polypeptide reads, in one-letter code: Glutamyl-tRNA(Gln) amidotransferase subunit A (486 aa).

Active-site charge relay system residues include Lys-79 and Ser-154. Ser-178 acts as the Acyl-ester intermediate in catalysis.

Belongs to the amidase family. GatA subfamily. In terms of assembly, heterotrimer of A, B and C subunits.

It carries out the reaction L-glutamyl-tRNA(Gln) + L-glutamine + ATP + H2O = L-glutaminyl-tRNA(Gln) + L-glutamate + ADP + phosphate + H(+). Functionally, allows the formation of correctly charged Gln-tRNA(Gln) through the transamidation of misacylated Glu-tRNA(Gln) in organisms which lack glutaminyl-tRNA synthetase. The reaction takes place in the presence of glutamine and ATP through an activated gamma-phospho-Glu-tRNA(Gln). The sequence is that of Glutamyl-tRNA(Gln) amidotransferase subunit A from Dehalococcoides mccartyi (strain ATCC BAA-2266 / KCTC 15142 / 195) (Dehalococcoides ethenogenes (strain 195)).